Here is a 765-residue protein sequence, read N- to C-terminus: Zinc metalloproteinase nas-37 (765 aa).

The signal sequence occupies residues 1–22 (MKSQACLKVCLALIGLVSIVST). A propeptide spanning residues 23–114 (AYIANDVVSD…SESNSPRSRR (92 aa)) is cleaved from the precursor. One can recognise a Peptidase M12A domain in the interval 115–308 (QAHPDPRNFW…AKMINTRYCS (194 aa)). Asparagine 126 is a glycosylation site (N-linked (GlcNAc...) asparagine). 6 disulfide bridges follow: cysteine 156–cysteine 307, cysteine 177–cysteine 196, cysteine 311–cysteine 331, cysteine 333–cysteine 342, cysteine 350–cysteine 374, and cysteine 400–cysteine 420. Histidine 204 contributes to the Zn(2+) binding site. Glutamate 205 is a catalytic residue. Positions 208 and 214 each coordinate Zn(2+). The 41-residue stretch at 303–343 (NTRYCSNVCQRSLPCLNEGYTDPNNCGRCRCPSGYGGTYCE) folds into the EGF-like domain. In terms of domain architecture, CUB spans 350-458 (CGGSLTASSS…RGFTLKYRAI (109 aa)). A disordered region spans residues 513–573 (KYSSEELYDP…TRPTPTTTVA (61 aa)). 2 stretches are compositionally biased toward low complexity: residues 526-545 (LSPS…DASP) and 562-573 (ALTRPTPTTTVA). The TSP type-1 domain occupies 576–627 (TASWSAWGEWSACSQPCGGCGTKTRVRACYGGNQVCPGSNLDRESCNAHACA). 3 cysteine pairs are disulfide-bonded: cysteine 588–cysteine 621, cysteine 592–cysteine 626, and cysteine 604–cysteine 611.

Zn(2+) serves as cofactor. As to expression, expressed in hypodermal cells. Not expressed in the seam cells in L1 to L3 larvae, but it is present in seam cells of L4 larvae. Also expressed in attachment points of the cuticle at the anterior end of larvae, in the arcade cells in the mouth, the anterior pharynx, the amphid socket cells, and in the rectal epithelial cells at the posterior end of the larvae (at protein level).

It localises to the secreted. Its function is as follows. Metalloprotease. Plays an essential role in molting, a process during larval stages in which a new cuticle is formed and the old cuticle is shed. Required during ecdysis, the opening of the cuticle to allow the worm to escape. The polypeptide is Zinc metalloproteinase nas-37 (nas-37) (Caenorhabditis elegans).